A 500-amino-acid polypeptide reads, in one-letter code: Proline--tRNA ligase (500 aa).

It belongs to the class-II aminoacyl-tRNA synthetase family. ProS type 3 subfamily. Homodimer.

It is found in the cytoplasm. The enzyme catalyses tRNA(Pro) + L-proline + ATP = L-prolyl-tRNA(Pro) + AMP + diphosphate. Its function is as follows. Catalyzes the attachment of proline to tRNA(Pro) in a two-step reaction: proline is first activated by ATP to form Pro-AMP and then transferred to the acceptor end of tRNA(Pro). In Paramagnetospirillum magneticum (strain ATCC 700264 / AMB-1) (Magnetospirillum magneticum), this protein is Proline--tRNA ligase.